Reading from the N-terminus, the 416-residue chain is Serine hydroxymethyltransferase (416 aa).

(6S)-5,6,7,8-tetrahydrofolate contacts are provided by residues Leu121 and 125–127 (GHL). Residue Lys230 is modified to N6-(pyridoxal phosphate)lysine. Residue 355 to 357 (SPF) participates in (6S)-5,6,7,8-tetrahydrofolate binding.

It belongs to the SHMT family. As to quaternary structure, homodimer. It depends on pyridoxal 5'-phosphate as a cofactor.

The protein resides in the cytoplasm. The catalysed reaction is (6R)-5,10-methylene-5,6,7,8-tetrahydrofolate + glycine + H2O = (6S)-5,6,7,8-tetrahydrofolate + L-serine. The protein operates within one-carbon metabolism; tetrahydrofolate interconversion. It participates in amino-acid biosynthesis; glycine biosynthesis; glycine from L-serine: step 1/1. Catalyzes the reversible interconversion of serine and glycine with tetrahydrofolate (THF) serving as the one-carbon carrier. This reaction serves as the major source of one-carbon groups required for the biosynthesis of purines, thymidylate, methionine, and other important biomolecules. Also exhibits THF-independent aldolase activity toward beta-hydroxyamino acids, producing glycine and aldehydes, via a retro-aldol mechanism. This Streptococcus thermophilus (strain ATCC BAA-250 / LMG 18311) protein is Serine hydroxymethyltransferase.